We begin with the raw amino-acid sequence, 532 residues long: Protein kinase domain-containing protein ppk9 (532 aa).

The Protein kinase domain occupies 23–274; it reads WLLGRTLGQG…VAEIMQHPWF (252 aa). ATP-binding positions include 29–37 and Lys-52; that span reads LGQGNLAKV. Asp-145 functions as the Proton acceptor in the catalytic mechanism. Residues 316–346 show a composition bias toward polar residues; the sequence is PSSSVGQIPQPTDHSALSPSKPMSISGTESP. The interval 316–349 is disordered; sequence PSSSVGQIPQPTDHSALSPSKPMSISGTESPNPD.

It is found in the cytoplasm. The protein resides in the nucleus. The protein localises to the cytoskeleton. Its subcellular location is the microtubule organizing center. It localises to the spindle pole body. The polypeptide is Protein kinase domain-containing protein ppk9 (ppk9) (Schizosaccharomyces pombe (strain 972 / ATCC 24843) (Fission yeast)).